The sequence spans 488 residues: Malonate-semialdehyde dehydrogenase (488 aa).

Alanine 150, phenylalanine 152, lysine 176, glutamate 179, arginine 180, serine 229, and threonine 251 together coordinate NAD(+). The active-site Nucleophile is cysteine 284. Residue glutamate 382 participates in NAD(+) binding.

The protein belongs to the aldehyde dehydrogenase family. IolA subfamily. As to quaternary structure, homotetramer.

The enzyme catalyses 3-oxopropanoate + NAD(+) + CoA + H2O = hydrogencarbonate + acetyl-CoA + NADH + H(+). The catalysed reaction is 2-methyl-3-oxopropanoate + NAD(+) + CoA + H2O = propanoyl-CoA + hydrogencarbonate + NADH + H(+). It functions in the pathway polyol metabolism; myo-inositol degradation into acetyl-CoA; acetyl-CoA from myo-inositol: step 7/7. Catalyzes the oxidation of malonate semialdehyde (MSA) and methylmalonate semialdehyde (MMSA) into acetyl-CoA and propanoyl-CoA, respectively. Is involved in a myo-inositol catabolic pathway. Bicarbonate, and not CO2, is the end-product of the enzymatic reaction. The chain is Malonate-semialdehyde dehydrogenase from Listeria monocytogenes serotype 4b (strain CLIP80459).